Reading from the N-terminus, the 446-residue chain is Probable rhamnogalacturonase A (446 aa).

A signal peptide spans 1–18 (MPALPILALALAPLLVNG). C39 and C65 are joined by a disulfide. N-linked (GlcNAc...) asparagine glycosylation is found at N50, N115, and N124. D216 (proton donor) is an active-site residue. Cysteines 218 and 235 form a disulfide. N236 and N281 each carry an N-linked (GlcNAc...) asparagine glycan. The active site involves H291. N318 carries an N-linked (GlcNAc...) asparagine glycan. 2 disulfide bridges follow: C341-C347 and C369-C378.

It belongs to the glycosyl hydrolase 28 family.

The protein localises to the secreted. The catalysed reaction is Endohydrolysis of alpha-D-GalA-(1-&gt;2)-alpha-L-Rha glycosidic bond in the rhamnogalacturonan I backbone with initial inversion of anomeric configuration releasing oligosaccharides with beta-D-GalA at the reducing end.. In terms of biological role, pectinolytic enzymes consist of four classes of enzymes: pectine lyase, polygalacturonase, pectin methylesterase and rhamnogalacturonase. Hydrolyzes alpha-D-galacturonopyranosyl-(1,2)-alpha-L-rhamnopyranosyl linkages in the backbone of the hairy regions of pectins. The polypeptide is Probable rhamnogalacturonase A (rhgA) (Aspergillus niger (strain ATCC MYA-4892 / CBS 513.88 / FGSC A1513)).